A 776-amino-acid polypeptide reads, in one-letter code: Ribosomal RNA large subunit methyltransferase K/L (776 aa).

The region spanning Asp68–Leu183 is the THUMP domain.

Belongs to the methyltransferase superfamily. RlmKL family.

The protein localises to the cytoplasm. It carries out the reaction guanosine(2445) in 23S rRNA + S-adenosyl-L-methionine = N(2)-methylguanosine(2445) in 23S rRNA + S-adenosyl-L-homocysteine + H(+). The enzyme catalyses guanosine(2069) in 23S rRNA + S-adenosyl-L-methionine = N(2)-methylguanosine(2069) in 23S rRNA + S-adenosyl-L-homocysteine + H(+). Its function is as follows. Specifically methylates the guanine in position 2445 (m2G2445) and the guanine in position 2069 (m7G2069) of 23S rRNA. This chain is Ribosomal RNA large subunit methyltransferase K/L, found in Psychrobacter cryohalolentis (strain ATCC BAA-1226 / DSM 17306 / VKM B-2378 / K5).